The sequence spans 1070 residues: DNA-directed RNA polymerase subunit beta (1070 aa).

The protein belongs to the RNA polymerase beta chain family. In plastids the minimal PEP RNA polymerase catalytic core is composed of four subunits: alpha, beta, beta', and beta''. When a (nuclear-encoded) sigma factor is associated with the core the holoenzyme is formed, which can initiate transcription.

The protein localises to the plastid. It is found in the chloroplast. The enzyme catalyses RNA(n) + a ribonucleoside 5'-triphosphate = RNA(n+1) + diphosphate. Functionally, DNA-dependent RNA polymerase catalyzes the transcription of DNA into RNA using the four ribonucleoside triphosphates as substrates. This Populus alba (White poplar) protein is DNA-directed RNA polymerase subunit beta.